The chain runs to 785 residues: Disintegrin and metalloproteinase domain-containing protein B (785 aa).

The first 26 residues, 1–26 (MRFLKSALPFVASALSLLSVQAAARS), serve as a signal peptide directing secretion. The Extracellular segment spans residues 27–703 (QEPSAIQHVS…GSWVEQHKNL (677 aa)). A Peptidase M12B domain is found at 279–507 (KQVALVGIAA…NSVKSSCLSD (229 aa)). N-linked (GlcNAc...) asparagine glycans are attached at residues N322, N329, and N355. 2 disulfides stabilise this stretch: C398–C492 and C446–C464. H429 contributes to the Zn(2+) binding site. E430 is an active-site residue. Zn(2+) is bound by residues H433 and H439. The 90-residue stretch at 516 to 605 (GSQCGNGIVE…TCPADSFKKD (90 aa)) folds into the Disintegrin domain. 3 N-linked (GlcNAc...) asparagine glycosylation sites follow: N561, N593, and N640. C577 and C597 are joined by a disulfide. The helical transmembrane segment at 704–724 (VIGVACGVGGLLVLSILWCMI) threads the bilayer. Residues 725–785 (NRCRRARTVV…GPYQSATRYA (61 aa)) are Cytoplasmic-facing. A disordered region spans residues 737–785 (PPMRPWPGPMPPPPPQMGQWAGPNRGYQGLRAEPPPPYPGPYQSATRYA). The span at 739 to 752 (MRPWPGPMPPPPPQ) shows a compositional bias: pro residues.

Requires Zn(2+) as cofactor.

The protein localises to the membrane. Functionally, probable zinc protease. In Aspergillus fumigatus (strain ATCC MYA-4609 / CBS 101355 / FGSC A1100 / Af293) (Neosartorya fumigata), this protein is Disintegrin and metalloproteinase domain-containing protein B (ADM-B).